A 68-amino-acid chain; its full sequence is uncharacterized protein (68 aa).

The region spanning 2–67 is the HMA domain; that stretch reads KTITLNIKGI…VIEDAGFDAT (66 aa). Residues Cys13 and Cys16 each coordinate a metal cation.

This is an uncharacterized protein from Haemophilus influenzae (strain ATCC 51907 / DSM 11121 / KW20 / Rd).